The sequence spans 103 residues: Truncated secreted TNF-receptor-like protein A53R (103 aa).

Residues S36–E73 form a TNFR-Cys 1 repeat. Cystine bridges form between C37/C50, C51/C64, and C54/C72. Residues R74–R103 form a TNFR-Cys 2; truncated repeat.

It belongs to the poxviridae A53R protein family.

This Vaccinia virus (strain Western Reserve) (VACV) protein is Truncated secreted TNF-receptor-like protein A53R.